The following is a 115-amino-acid chain: TSLVDGVGGSTSPGIASFAATLLHRYPINPSPRHDVSAYLCSLKNPSPRPPIPSTPHAITNHGHDKCMQTSHLLCLLLCVATGSEEGEGKEKKKEQNNRLAEGIIRATELVLLFL.

This is an uncharacterized protein from Human cytomegalovirus (strain AD169) (HHV-5).